The following is a 258-amino-acid chain: D-beta-hydroxybutyrate dehydrogenase (258 aa).

Position 8–32 (8–32) interacts with NAD(+); it reads LVTGSTSGIGLGIAKALAAQGANII. S140 is a binding site for substrate. Y153 (proton acceptor) is an active-site residue.

Belongs to the short-chain dehydrogenases/reductases (SDR) family.

The catalysed reaction is (R)-3-hydroxybutanoate + NAD(+) = acetoacetate + NADH + H(+). The sequence is that of D-beta-hydroxybutyrate dehydrogenase (hbdH1) from Cupriavidus necator (strain ATCC 17699 / DSM 428 / KCTC 22496 / NCIMB 10442 / H16 / Stanier 337) (Ralstonia eutropha).